A 370-amino-acid polypeptide reads, in one-letter code: Glycerophosphodiester phosphodiesterase GDPD3 (370 aa).

One can recognise a GP-PDE domain in the interval 35–322; that stretch reads FVLMGHRGFG…DMVKDISEAI (288 aa).

This sequence belongs to the glycerophosphoryl diester phosphodiesterase family. Expressed in flowers and siliques.

The enzyme catalyses a sn-glycero-3-phosphodiester + H2O = an alcohol + sn-glycerol 3-phosphate + H(+). This Arabidopsis thaliana (Mouse-ear cress) protein is Glycerophosphodiester phosphodiesterase GDPD3.